The sequence spans 115 residues: Large ribosomal subunit protein bL20 (115 aa).

This sequence belongs to the bacterial ribosomal protein bL20 family.

In terms of biological role, binds directly to 23S ribosomal RNA and is necessary for the in vitro assembly process of the 50S ribosomal subunit. It is not involved in the protein synthesizing functions of that subunit. In Prochlorococcus marinus (strain NATL2A), this protein is Large ribosomal subunit protein bL20.